Consider the following 292-residue polypeptide: uncharacterized protein (292 aa).

This is an uncharacterized protein from Aquifex aeolicus (strain VF5).